A 601-amino-acid chain; its full sequence is Potassium channel KAT2 (601 aa).

The Cytoplasmic segment spans residues 1-42; sequence METISNIFHNDPLPPLGARANQSIKLRKFIISPYDSRYRTWE. A helical transmembrane segment spans residues 43-63; it reads TFLLVLVVYSAWICPFELAYL. At 64-71 the chain is on the extracellular side; it reads RNLSWKVS. A helical membrane pass occupies residues 72 to 92; that stretch reads LVDNIIDSFFAIDIILTFFLA. Residues 93-112 are Cytoplasmic-facing; sequence YLDQKSYLLVDDPKRIVARY. Residues 113–133 form a helical membrane-spanning segment; that stretch reads FSSWFLFDVCSTIPYQLLGQI. At 134 to 144 the chain is on the extracellular side; it reads FKKHENGLAYR. The helical; Voltage-sensor transmembrane segment at 145 to 165 threads the bilayer; the sequence is LLSMLRLWRLRRLSELFARLE. At 166–179 the chain is on the cytoplasmic side; the sequence is KDIRLNYYWIRCTK. The helical transmembrane segment at 180 to 200 threads the bilayer; that stretch reads LISVTLFAVHCSGCFNYLIAD. The Extracellular segment spans residues 201-227; sequence RYPNPARTWIGAAIPNYRSQNLWVRYV. The segment at residues 228–247 is an intramembrane region (pore-forming); the sequence is TAIYWSITTLTTTGYGDLHA. The Extracellular portion of the chain corresponds to 248 to 251; it reads ENQR. Residues 252-272 traverse the membrane as a helical segment; the sequence is EMLFSICYMLFNLGLTAYLIG. The Cytoplasmic segment spans residues 273 to 601; it reads NMTNLVVQGS…DGDHLFFMEI (329 aa). 356–475 is an a nucleoside 3',5'-cyclic phosphate binding site; the sequence is LFHGVSFTCM…RVILNNLSQK (120 aa). The KHA domain maps to 530-601; sequence RVTIHMYSQR…DGDHLFFMEI (72 aa).

The protein belongs to the potassium channel family. Plant (TC 1.A.1.4) subfamily.

Its subcellular location is the membrane. Its function is as follows. Probable inward-rectifying potassium channel. Assuming opened or closed conformations in response to the voltage difference across the membrane, the channel is activated by hyperpolarization. The protein is Potassium channel KAT2 of Oryza sativa subsp. japonica (Rice).